The following is a 276-amino-acid chain: Glucosamine-6-phosphate deaminase 2 (276 aa).

Residue Asp-72 is the Proton acceptor; for enolization step of the active site. Positions 106 to 130 (ILDGNATDLQAECDAFEKKIKEAGG) form a coiled coil. Catalysis depends on Asp-141, which acts as the For ring-opening step. His-143 serves as the catalytic Proton acceptor; for ring-opening step. The active-site For ring-opening step is the Glu-148. Residue Thr-161 is modified to Phosphothreonine.

Belongs to the glucosamine/galactosamine-6-phosphate isomerase family. In terms of assembly, homohexamer.

The protein resides in the cytoplasm. It carries out the reaction alpha-D-glucosamine 6-phosphate + H2O = beta-D-fructose 6-phosphate + NH4(+). Its pathway is nucleotide-sugar biosynthesis; UDP-N-acetyl-alpha-D-glucosamine biosynthesis; alpha-D-glucosamine 6-phosphate from D-fructose 6-phosphate: step 1/1. Allosterically activated by N-acetylglucosamine-6-phosphate (GlcNAc6P). Its function is as follows. Catalyzes the reversible conversion of alpha-D-glucosamine 6-phosphate (GlcN-6P) into beta-D-fructose 6-phosphate (Fru-6P) and ammonium ion, a regulatory reaction step in de novo uridine diphosphate-N-acetyl-alpha-D-glucosamine (UDP-GlcNAc) biosynthesis via hexosamine pathway. Deamination is coupled to aldo-keto isomerization mediating the metabolic flux from UDP-GlcNAc toward Fru-6P. At high ammonium level can drive amination and isomerization of Fru-6P toward hexosamines and UDP-GlcNAc synthesis. Has a role in fine tuning the metabolic fluctuations of cytosolic UDP-GlcNAc and their effects on hyaluronan synthesis that occur during tissue remodeling. This is Glucosamine-6-phosphate deaminase 2 from Bos taurus (Bovine).